We begin with the raw amino-acid sequence, 339 residues long: Ketol-acid reductoisomerase (NADP(+)) (339 aa).

The KARI N-terminal Rossmann domain maps to 1–182 (MRVYYDRDAD…GGGRAGIIET (182 aa)). Residues 24–27 (YGSQ), Arg48, Ser51, Ser53, and 83–86 (DELQ) contribute to the NADP(+) site. His108 is a catalytic residue. Gly134 lines the NADP(+) pocket. Residues 183–328 (TFREECETDL…AKLRDMMPWI (146 aa)) form the KARI C-terminal knotted domain. Mg(2+) contacts are provided by Asp191, Glu195, Glu227, and Glu231. Ser252 is a binding site for substrate.

It belongs to the ketol-acid reductoisomerase family. Mg(2+) is required as a cofactor.

The catalysed reaction is (2R)-2,3-dihydroxy-3-methylbutanoate + NADP(+) = (2S)-2-acetolactate + NADPH + H(+). It catalyses the reaction (2R,3R)-2,3-dihydroxy-3-methylpentanoate + NADP(+) = (S)-2-ethyl-2-hydroxy-3-oxobutanoate + NADPH + H(+). Its pathway is amino-acid biosynthesis; L-isoleucine biosynthesis; L-isoleucine from 2-oxobutanoate: step 2/4. It participates in amino-acid biosynthesis; L-valine biosynthesis; L-valine from pyruvate: step 2/4. Its function is as follows. Involved in the biosynthesis of branched-chain amino acids (BCAA). Catalyzes an alkyl-migration followed by a ketol-acid reduction of (S)-2-acetolactate (S2AL) to yield (R)-2,3-dihydroxy-isovalerate. In the isomerase reaction, S2AL is rearranged via a Mg-dependent methyl migration to produce 3-hydroxy-3-methyl-2-ketobutyrate (HMKB). In the reductase reaction, this 2-ketoacid undergoes a metal-dependent reduction by NADPH to yield (R)-2,3-dihydroxy-isovalerate. This is Ketol-acid reductoisomerase (NADP(+)) from Nitrobacter hamburgensis (strain DSM 10229 / NCIMB 13809 / X14).